The following is a 391-amino-acid chain: Probable sugar efflux transporter (391 aa).

12 consecutive transmembrane segments (helical) span residues 16-36, 51-71, 82-102, 103-123, 138-158, 171-191, 210-230, 247-267, 277-297, 300-320, 338-358, and 361-381; these read VFVF…PVAL, VGLM…PLML, LLFL…AWNF, WVLL…WSIT, QALG…LPLG, FGVI…LLPP, PLLM…FTTY, ITTL…FLFG, FIAF…VFKN, WVIF…TIAL, IFSG…SIVI, and LGLG…LFWL.

Belongs to the major facilitator superfamily. SotB (TC 2.A.1.2) family.

The protein localises to the cell inner membrane. Involved in the efflux of sugars. The physiological role may be the reduction of the intracellular concentration of toxic sugars or sugar metabolites. The sequence is that of Probable sugar efflux transporter from Helicobacter pylori (strain G27).